Here is a 640-residue protein sequence, read N- to C-terminus: 1-deoxy-D-xylulose-5-phosphate synthase (640 aa).

Thiamine diphosphate contacts are provided by residues H79 and G120–S122. D151 is a binding site for Mg(2+). Thiamine diphosphate contacts are provided by residues G152–A153, N180, Y287, and E369. N180 contributes to the Mg(2+) binding site.

This sequence belongs to the transketolase family. DXPS subfamily. In terms of assembly, homodimer. Mg(2+) is required as a cofactor. Thiamine diphosphate serves as cofactor.

The enzyme catalyses D-glyceraldehyde 3-phosphate + pyruvate + H(+) = 1-deoxy-D-xylulose 5-phosphate + CO2. The protein operates within metabolic intermediate biosynthesis; 1-deoxy-D-xylulose 5-phosphate biosynthesis; 1-deoxy-D-xylulose 5-phosphate from D-glyceraldehyde 3-phosphate and pyruvate: step 1/1. Its function is as follows. Catalyzes the acyloin condensation reaction between C atoms 2 and 3 of pyruvate and glyceraldehyde 3-phosphate to yield 1-deoxy-D-xylulose-5-phosphate (DXP). This Thioalkalivibrio sulfidiphilus (strain HL-EbGR7) protein is 1-deoxy-D-xylulose-5-phosphate synthase.